A 1318-amino-acid chain; its full sequence is Maestro heat-like repeat family member 5 (1318 aa).

The segment at 1–38 (MDRQCSERPYSCTPTGRVSSAVSQNSRISPPVSTSMKD) is disordered. Residues 12–38 (CTPTGRVSSAVSQNSRISPPVSTSMKD) show a composition bias toward polar residues. The stretch at 581 to 618 (DELHFLLSHLYIWLASEKAHERQRAVHSCMILLKFLNH) is one HEAT 1 repeat. The segment at 676 to 695 (ESQAPKELSQAHSDGAPLWN) is disordered. 8 HEAT repeats span residues 769-811 (GAKL…SHTC), 840-880 (PTSH…LLAA), 996-1033 (RQIPAVLRQLLPSLQSPQERERKVAILILTKFLYSPVL), 1037-1074 (LPKQAALTVLAQGLHDPSPEVRVLSLQGLSNILFHPDK), 1076-1113 (SLLQGQLRPLLDGFFQSSDQVIVCIMGTVSDTLHRLGA), 1118-1155 (SQSLGVAISTRSFFNDERDGIRAAAMALFGDLVAAMAD), 1164-1200 (QVHQSMVPLLLHLKDQCPAVATQAKFTFYRCAVLLRW), and 1278-1315 (VDTNLLFRTFEHLRSDPEPSIREFATSQLSFLQKVSAR).

The protein is Maestro heat-like repeat family member 5 (MROH5) of Homo sapiens (Human).